We begin with the raw amino-acid sequence, 61 residues long: Small ribosomal subunit protein uS14 (61 aa).

C24, C27, C40, and C43 together coordinate Zn(2+).

It belongs to the universal ribosomal protein uS14 family. Zinc-binding uS14 subfamily. Part of the 30S ribosomal subunit. Contacts proteins S3 and S10. Zn(2+) serves as cofactor.

Binds 16S rRNA, required for the assembly of 30S particles and may also be responsible for determining the conformation of the 16S rRNA at the A site. The sequence is that of Small ribosomal subunit protein uS14 from Rhodococcus erythropolis (strain PR4 / NBRC 100887).